Here is a 263-residue protein sequence, read N- to C-terminus: Proliferating cell nuclear antigen (263 aa).

Residues 61–80 (RCDRTINLGLSLANMSKALK) mediate DNA binding.

Belongs to the PCNA family. As to quaternary structure, homotrimer. Forms a complex with activator 1 heteropentamer in the presence of ATP.

Its subcellular location is the nucleus. Its function is as follows. This protein is an auxiliary protein of DNA polymerase delta and is involved in the control of eukaryotic DNA replication by increasing the polymerase's processibility during elongation of the leading strand. The sequence is that of Proliferating cell nuclear antigen (pcn-1) from Caenorhabditis elegans.